A 136-amino-acid polypeptide reads, in one-letter code: Prefoldin subunit alpha (136 aa).

It belongs to the prefoldin subunit alpha family. Heterohexamer of two alpha and four beta subunits.

The protein resides in the cytoplasm. In terms of biological role, molecular chaperone capable of stabilizing a range of proteins. Seems to fulfill an ATP-independent, HSP70-like function in archaeal de novo protein folding. The polypeptide is Prefoldin subunit alpha (Pyrobaculum arsenaticum (strain DSM 13514 / JCM 11321 / PZ6)).